Here is a 353-residue protein sequence, read N- to C-terminus: UDP-N-acetylglucosamine--N-acetylmuramyl-(pentapeptide) pyrophosphoryl-undecaprenol N-acetylglucosamine transferase (353 aa).

UDP-N-acetyl-alpha-D-glucosamine is bound by residues 15–17, N125, R165, S186, and Q286; that span reads TGG.

This sequence belongs to the glycosyltransferase 28 family. MurG subfamily.

The protein localises to the cell inner membrane. The enzyme catalyses di-trans,octa-cis-undecaprenyl diphospho-N-acetyl-alpha-D-muramoyl-L-alanyl-D-glutamyl-meso-2,6-diaminopimeloyl-D-alanyl-D-alanine + UDP-N-acetyl-alpha-D-glucosamine = di-trans,octa-cis-undecaprenyl diphospho-[N-acetyl-alpha-D-glucosaminyl-(1-&gt;4)]-N-acetyl-alpha-D-muramoyl-L-alanyl-D-glutamyl-meso-2,6-diaminopimeloyl-D-alanyl-D-alanine + UDP + H(+). The protein operates within cell wall biogenesis; peptidoglycan biosynthesis. Its function is as follows. Cell wall formation. Catalyzes the transfer of a GlcNAc subunit on undecaprenyl-pyrophosphoryl-MurNAc-pentapeptide (lipid intermediate I) to form undecaprenyl-pyrophosphoryl-MurNAc-(pentapeptide)GlcNAc (lipid intermediate II). The protein is UDP-N-acetylglucosamine--N-acetylmuramyl-(pentapeptide) pyrophosphoryl-undecaprenol N-acetylglucosamine transferase of Chlamydia muridarum (strain MoPn / Nigg).